We begin with the raw amino-acid sequence, 176 residues long: Peptide deformylase 2 (176 aa).

The Fe cation site is built by C99 and H141. E142 is an active-site residue. H145 is a Fe cation binding site.

It belongs to the polypeptide deformylase family. Fe(2+) is required as a cofactor.

It catalyses the reaction N-terminal N-formyl-L-methionyl-[peptide] + H2O = N-terminal L-methionyl-[peptide] + formate. In terms of biological role, removes the formyl group from the N-terminal Met of newly synthesized proteins. Requires at least a dipeptide for an efficient rate of reaction. N-terminal L-methionine is a prerequisite for activity but the enzyme has broad specificity at other positions. This chain is Peptide deformylase 2, found in Bordetella bronchiseptica (strain ATCC BAA-588 / NCTC 13252 / RB50) (Alcaligenes bronchisepticus).